The primary structure comprises 283 residues: Pantothenate synthetase (283 aa).

Residue 30 to 37 (MGNLHDGH) participates in ATP binding. The Proton donor role is filled by H37. Q61 lines the (R)-pantoate pocket. Q61 contributes to the beta-alanine binding site. 149-152 (GEKD) is a binding site for ATP. (R)-pantoate is bound at residue Q155. 186 to 189 (LSSR) contacts ATP.

The protein belongs to the pantothenate synthetase family. In terms of assembly, homodimer.

The protein resides in the cytoplasm. The catalysed reaction is (R)-pantoate + beta-alanine + ATP = (R)-pantothenate + AMP + diphosphate + H(+). The protein operates within cofactor biosynthesis; (R)-pantothenate biosynthesis; (R)-pantothenate from (R)-pantoate and beta-alanine: step 1/1. Catalyzes the condensation of pantoate with beta-alanine in an ATP-dependent reaction via a pantoyl-adenylate intermediate. This Shigella dysenteriae serotype 1 (strain Sd197) protein is Pantothenate synthetase.